The sequence spans 417 residues: Gamma-glutamyl phosphate reductase (417 aa).

Belongs to the gamma-glutamyl phosphate reductase family.

It localises to the cytoplasm. The catalysed reaction is L-glutamate 5-semialdehyde + phosphate + NADP(+) = L-glutamyl 5-phosphate + NADPH + H(+). It functions in the pathway amino-acid biosynthesis; L-proline biosynthesis; L-glutamate 5-semialdehyde from L-glutamate: step 2/2. Its function is as follows. Catalyzes the NADPH-dependent reduction of L-glutamate 5-phosphate into L-glutamate 5-semialdehyde and phosphate. The product spontaneously undergoes cyclization to form 1-pyrroline-5-carboxylate. This chain is Gamma-glutamyl phosphate reductase, found in Escherichia coli O157:H7.